Consider the following 264-residue polypeptide: Thymidylate synthase (264 aa).

Residue R21 participates in dUMP binding. H51 contributes to the (6R)-5,10-methylene-5,6,7,8-tetrahydrofolate binding site. A dUMP-binding site is contributed by R126 to R127. C146 functions as the Nucleophile in the catalytic mechanism. DUMP is bound by residues R166–D169, N177, and H207–Y209. D169 lines the (6R)-5,10-methylene-5,6,7,8-tetrahydrofolate pocket. A263 is a binding site for (6R)-5,10-methylene-5,6,7,8-tetrahydrofolate.

The protein belongs to the thymidylate synthase family. Bacterial-type ThyA subfamily. Homodimer.

It is found in the cytoplasm. The enzyme catalyses dUMP + (6R)-5,10-methylene-5,6,7,8-tetrahydrofolate = 7,8-dihydrofolate + dTMP. It participates in pyrimidine metabolism; dTTP biosynthesis. Functionally, catalyzes the reductive methylation of 2'-deoxyuridine-5'-monophosphate (dUMP) to 2'-deoxythymidine-5'-monophosphate (dTMP) while utilizing 5,10-methylenetetrahydrofolate (mTHF) as the methyl donor and reductant in the reaction, yielding dihydrofolate (DHF) as a by-product. This enzymatic reaction provides an intracellular de novo source of dTMP, an essential precursor for DNA biosynthesis. This chain is Thymidylate synthase, found in Brucella abortus (strain 2308).